Consider the following 266-residue polypeptide: Glucosamine-6-phosphate deaminase (266 aa).

Asp72 serves as the catalytic Proton acceptor; for enolization step. The For ring-opening step role is filled by Asp141. His143 acts as the Proton acceptor; for ring-opening step in catalysis. Glu148 functions as the For ring-opening step in the catalytic mechanism.

It belongs to the glucosamine/galactosamine-6-phosphate isomerase family. NagB subfamily. In terms of assembly, homohexamer.

It carries out the reaction alpha-D-glucosamine 6-phosphate + H2O = beta-D-fructose 6-phosphate + NH4(+). The protein operates within amino-sugar metabolism; N-acetylneuraminate degradation; D-fructose 6-phosphate from N-acetylneuraminate: step 5/5. With respect to regulation, allosterically activated by N-acetylglucosamine 6-phosphate (GlcNAc6P). In terms of biological role, catalyzes the reversible isomerization-deamination of glucosamine 6-phosphate (GlcN6P) to form fructose 6-phosphate (Fru6P) and ammonium ion. The polypeptide is Glucosamine-6-phosphate deaminase (Aliivibrio salmonicida (strain LFI1238) (Vibrio salmonicida (strain LFI1238))).